The sequence spans 378 residues: Chitinase (378 aa).

Residues 1-28 (MNFTVKYSFLVICLLCCLLSTYVSVIEG) form the signal peptide. Residues 53 to 378 (GIIQGYYPSW…AIEYFVESLH (326 aa)) form the GH18 domain. E174 (proton donor) is an active-site residue. The cysteines at positions 220 and 230 are disulfide-linked.

The protein belongs to the glycosyl hydrolase 18 family. As to quaternary structure, forms a hetero-multimeric, high molecular weight complex composed of at least CHT1, SOAP AND WARP. Within the complex, may interact with WARP via a disulfide bond.

Its subcellular location is the secreted. The protein resides in the cytoplasmic vesicle. It is found in the secretory vesicle. It localises to the microneme. It catalyses the reaction Random endo-hydrolysis of N-acetyl-beta-D-glucosaminide (1-&gt;4)-beta-linkages in chitin and chitodextrins.. Inhibited by allosamidin. In terms of biological role, endochitinase that cleaves beta-1,4-linkages between tri- and tetramers of N-acetylglucosamine (GlcNAc) from penta- and hexameric chitin oligomers. Does not cleave smaller chitin oligosaccharides. Required to cross the acellular, chitin-containing peritrophic matrix (PM) which is formed around the ingested blood meal in the mosquito midgut allowing the ookinete to invade the mosquito gut epithelium. This Plasmodium falciparum (isolate 3D7) protein is Chitinase.